The following is a 501-amino-acid chain: Glutamate--tRNA ligase (501 aa).

A 'HIGH' region motif is present at residues 11-21 (PSPTGALHIGG). A 'KMSKS' region motif is present at residues 260-264 (KLSKR). K263 lines the ATP pocket.

The protein belongs to the class-I aminoacyl-tRNA synthetase family. Glutamate--tRNA ligase type 1 subfamily. Monomer.

The protein localises to the cytoplasm. It catalyses the reaction tRNA(Glu) + L-glutamate + ATP = L-glutamyl-tRNA(Glu) + AMP + diphosphate. In terms of biological role, catalyzes the attachment of glutamate to tRNA(Glu) in a two-step reaction: glutamate is first activated by ATP to form Glu-AMP and then transferred to the acceptor end of tRNA(Glu). The chain is Glutamate--tRNA ligase from Flavobacterium psychrophilum (strain ATCC 49511 / DSM 21280 / CIP 103535 / JIP02/86).